Reading from the N-terminus, the 275-residue chain is NH(3)-dependent NAD(+) synthetase (275 aa).

46 to 53 (GISGGQDS) is an ATP binding site. A Mg(2+)-binding site is contributed by Asp-52. Residue Arg-140 participates in deamido-NAD(+) binding. Thr-160 provides a ligand contact to ATP. Residue Glu-165 coordinates Mg(2+). Lys-173 and Asp-180 together coordinate deamido-NAD(+). Lys-189 and Thr-211 together coordinate ATP. 260 to 261 (HK) is a deamido-NAD(+) binding site.

The protein belongs to the NAD synthetase family. As to quaternary structure, homodimer.

The catalysed reaction is deamido-NAD(+) + NH4(+) + ATP = AMP + diphosphate + NAD(+) + H(+). It participates in cofactor biosynthesis; NAD(+) biosynthesis; NAD(+) from deamido-NAD(+) (ammonia route): step 1/1. Functionally, catalyzes the ATP-dependent amidation of deamido-NAD to form NAD. Uses ammonia as a nitrogen source. The chain is NH(3)-dependent NAD(+) synthetase from Salmonella typhi.